We begin with the raw amino-acid sequence, 118 residues long: Pterin-4-alpha-carbinolamine dehydratase (118 aa).

Belongs to the pterin-4-alpha-carbinolamine dehydratase family.

It catalyses the reaction (4aS,6R)-4a-hydroxy-L-erythro-5,6,7,8-tetrahydrobiopterin = (6R)-L-erythro-6,7-dihydrobiopterin + H2O. Its function is as follows. Involved in tetrahydrobiopterin biosynthesis. Seems to both prevent the formation of 7-pterins and accelerate the formation of quinonoid-BH2. May also have a positive regulatory role in the expression of phhA. The polypeptide is Pterin-4-alpha-carbinolamine dehydratase (phhB) (Pseudomonas syringae pv. tomato (strain ATCC BAA-871 / DC3000)).